A 313-amino-acid chain; its full sequence is Protein ABA AND ROS SENSITIVE 1 (313 aa).

A Nuclear localization signal 1 motif is present at residues 5–12 (AKKKAMFR). Residues 39 to 61 (CRVCNVVLKSESLWDVHQASRKH) form a C2H2-type zinc finger. A compositionally biased stretch (basic and acidic residues) spans 115–131 (ARAEVEPAKSKNLEQSK). Disordered stretches follow at residues 115-189 (ARAE…LPTG), 232-254 (MEEE…QRSY), and 271-313 (ARLA…AQHL). Over residues 155–176 (TDSSNTKTTSEPKQSQTQTTGP) the composition is skewed to polar residues. Over residues 232–248 (MEEEEVDAAETIEEEEQ) the composition is skewed to acidic residues. Residues 232–271 (MEEEEVDAAETIEEEEQREQRSYKEKVEILKRKKMELKAA) are a coiled coil. The Nuclear localization signal 2 signature appears at 274 to 281 (AKRSKTSE). Residues 293-305 (ESPSDEEDDEDSA) are compositionally biased toward acidic residues.

Mostly expressed in siliques and, to a lower extent, in roots. Barely deteclable in leaves and stems.

The protein resides in the nucleus. It localises to the cytoplasm. Functionally, essential for breaking seed dormancy before seed germination. Prevents reactive oxygen species (ROS) accumulation in response to abscisic acid (ABA) and oxidative stress, probably by repressing the accumulation of ABA-induced ROS-scavenging enzymes (e.g. CSD3). This is Protein ABA AND ROS SENSITIVE 1 from Arabidopsis thaliana (Mouse-ear cress).